The primary structure comprises 252 residues: Mediator of RNA polymerase II transcription subunit 4 (252 aa).

Residues 70-112 (KIHQEMQVLEKEVEKRDSDIQQLQKQLKEAEHILATAVYQAKE) are a coiled coil. The interval 218 to 252 (HSNEFLMESLGPNKENEEDVEVMSTDSSSSSSDSD) is disordered. Over residues 241–252 (STDSSSSSSDSD) the composition is skewed to low complexity.

The protein belongs to the Mediator complex subunit 4 family. Component of the Mediator complex.

The protein localises to the nucleus. Component of the Mediator complex, a coactivator involved in the regulated transcription of nearly all RNA polymerase II-dependent genes. Mediator functions as a bridge to convey information from gene-specific regulatory proteins to the basal RNA polymerase II transcription machinery. Mediator is recruited to promoters by direct interactions with regulatory proteins and serves as a scaffold for the assembly of a functional preinitiation complex with RNA polymerase II and the general transcription factors. The chain is Mediator of RNA polymerase II transcription subunit 4 (med4) from Xenopus tropicalis (Western clawed frog).